The sequence spans 502 residues: Type II secretion system protein E (502 aa).

Residue 263–270 participates in ATP binding; sequence GPTGSGKT. Positions 396, 399, 429, and 432 each coordinate Zn(2+). A disordered region spans residues 461–480; that stretch reads SSEQEMTRHARTSGPSIRDD.

This sequence belongs to the GSP E family. As to quaternary structure, homodimer. Dimerization is directed by a relatively short domain near the extreme N-terminus and is essential for extracellular protein secretion. May form homooligomers. Interacts with XcpY/GspL. Forms an inner membrane platform subcomplex with XcpS/GspF, XcpY/GspL and XcpZ/GspM. It depends on Zn(2+) as a cofactor.

It localises to the cell inner membrane. It carries out the reaction ATP + H2O + cellular proteinSide 1 = ADP + phosphate + cellular proteinSide 2.. Functionally, ATPase component of the type II secretion system required for the energy-dependent secretion of extracellular factors such as proteases and toxins from the periplasm. Acts as a molecular motor to provide the energy that is required for assembly of the pseudopilus and the extrusion of substrates generated in the cytoplasm. This Pseudomonas aeruginosa (strain ATCC 15692 / DSM 22644 / CIP 104116 / JCM 14847 / LMG 12228 / 1C / PRS 101 / PAO1) protein is Type II secretion system protein E (xcpR).